A 462-amino-acid chain; its full sequence is GTPase Der (462 aa).

EngA-type G domains lie at 3–166 and 175–348; these read PVIA…ITEM and IKIA…HSAI. GTP is bound by residues 9–16, 56–60, 118–121, 181–188, 228–232, and 293–296; these read GRPNVGKS, DTGGI, NKTD, DTAGV, and NKWD. The 85-residue stretch at 349 to 433 folds into the KH-like domain; it reads QSFSTPKLTR…PLKIEFKGGQ (85 aa).

This sequence belongs to the TRAFAC class TrmE-Era-EngA-EngB-Septin-like GTPase superfamily. EngA (Der) GTPase family. As to quaternary structure, associates with the 50S ribosomal subunit.

Functionally, GTPase that plays an essential role in the late steps of ribosome biogenesis. The sequence is that of GTPase Der from Legionella pneumophila (strain Lens).